A 102-amino-acid polypeptide reads, in one-letter code: Acylphosphatase 1 (102 aa).

Residues 12 to 100 form the Acylphosphatase-like domain; sequence TRLVRVRGRV…PRFDRFEQLP (89 aa). Catalysis depends on residues Arg27 and Asn45.

This sequence belongs to the acylphosphatase family.

The catalysed reaction is an acyl phosphate + H2O = a carboxylate + phosphate + H(+). This Ralstonia nicotianae (strain ATCC BAA-1114 / GMI1000) (Ralstonia solanacearum) protein is Acylphosphatase 1 (acyP1).